A 503-amino-acid polypeptide reads, in one-letter code: Arabinose import ATP-binding protein AraG 1 (503 aa).

ABC transporter domains follow at residues 5–240 and 251–497; these read LRFD…MVGR and RALG…LPQT. ATP is bound at residue 37-44; the sequence is GENGAGKS.

It belongs to the ABC transporter superfamily. Arabinose importer (TC 3.A.1.2.2) family. As to quaternary structure, the complex is composed of two ATP-binding proteins (AraG), two transmembrane proteins (AraH) and a solute-binding protein (AraF).

The protein localises to the cell inner membrane. It catalyses the reaction L-arabinose(out) + ATP + H2O = L-arabinose(in) + ADP + phosphate + H(+). Its function is as follows. Part of the ABC transporter complex AraFGH involved in arabinose import. Responsible for energy coupling to the transport system. This is Arabinose import ATP-binding protein AraG 1 from Burkholderia ambifaria (strain ATCC BAA-244 / DSM 16087 / CCUG 44356 / LMG 19182 / AMMD) (Burkholderia cepacia (strain AMMD)).